A 329-amino-acid polypeptide reads, in one-letter code: R-linalool synthase (329 aa).

Aspartate 79 is a binding site for Mg(2+). The DDXXD motif motif lies at 79 to 83; that stretch reads DDQFD. Arginine 172 provides a ligand contact to substrate. 2 residues coordinate Mg(2+): asparagine 218 and serine 222. Residues 218 to 226 carry the NXXXSXXXD motif motif; it reads NELHSFEKD. Substrate is bound at residue lysine 225. Position 226 (aspartate 226) interacts with Mg(2+). 308–309 serves as a coordination point for substrate; it reads RY.

It belongs to the terpene synthase family. In terms of assembly, homodimer. The cofactor is Mg(2+).

The catalysed reaction is (2E)-geranyl diphosphate + H2O = (R)-linalool + diphosphate. It carries out the reaction (2E,6E)-farnesyl diphosphate + H2O = (6E)-nerolidol + diphosphate. Functionally, in vitro, catalyzes the formation of R-linalool from geranyl diphosphate (GPP). Can also accept farnesyl diphosphate (FPP) as substrate to produce trans-nerolidol. The chain is R-linalool synthase from Streptomyces clavuligerus.